Consider the following 413-residue polypeptide: Serine hydroxymethyltransferase (413 aa).

(6S)-5,6,7,8-tetrahydrofolate is bound by residues L117 and 121–123 (GHL). K226 is subject to N6-(pyridoxal phosphate)lysine. (6S)-5,6,7,8-tetrahydrofolate is bound at residue 349–351 (SPF).

This sequence belongs to the SHMT family. As to quaternary structure, homodimer. Pyridoxal 5'-phosphate serves as cofactor.

The protein resides in the cytoplasm. It catalyses the reaction (6R)-5,10-methylene-5,6,7,8-tetrahydrofolate + glycine + H2O = (6S)-5,6,7,8-tetrahydrofolate + L-serine. It functions in the pathway one-carbon metabolism; tetrahydrofolate interconversion. The protein operates within amino-acid biosynthesis; glycine biosynthesis; glycine from L-serine: step 1/1. Functionally, catalyzes the reversible interconversion of serine and glycine with tetrahydrofolate (THF) serving as the one-carbon carrier. This reaction serves as the major source of one-carbon groups required for the biosynthesis of purines, thymidylate, methionine, and other important biomolecules. Also exhibits THF-independent aldolase activity toward beta-hydroxyamino acids, producing glycine and aldehydes, via a retro-aldol mechanism. This chain is Serine hydroxymethyltransferase, found in Listeria innocua serovar 6a (strain ATCC BAA-680 / CLIP 11262).